Here is an 82-residue protein sequence, read N- to C-terminus: RNA-binding protein GK0100 (82 aa).

The protein belongs to the eukaryotic ribosomal protein eL8 family.

This Geobacillus kaustophilus (strain HTA426) protein is RNA-binding protein GK0100.